A 259-amino-acid chain; its full sequence is Taurine import ATP-binding protein TauB (259 aa).

Positions 4 to 233 (LELERISAQY…RYAAGESARA (230 aa)) constitute an ABC transporter domain. Residue 38-45 (GPSGSGKT) coordinates ATP.

The protein belongs to the ABC transporter superfamily. Taurine importer (TC 3.A.1.17.1) family. The complex is composed of two ATP-binding proteins (TauB), two transmembrane proteins (TauC) and a solute-binding protein (TauA).

It is found in the cell inner membrane. The enzyme catalyses taurine(out) + ATP + H2O = taurine(in) + ADP + phosphate + H(+). In terms of biological role, part of the ABC transporter complex TauABC involved in taurine import. Responsible for energy coupling to the transport system. The sequence is that of Taurine import ATP-binding protein TauB from Pseudomonas entomophila (strain L48).